The sequence spans 128 residues: Transcription antitermination protein NusB (128 aa).

This sequence belongs to the NusB family.

In terms of biological role, involved in transcription antitermination. Required for transcription of ribosomal RNA (rRNA) genes. Binds specifically to the boxA antiterminator sequence of the ribosomal RNA (rrn) operons. The sequence is that of Transcription antitermination protein NusB from Listeria innocua serovar 6a (strain ATCC BAA-680 / CLIP 11262).